Consider the following 284-residue polypeptide: MEMO1 family protein MmarC6_1286 (284 aa).

This sequence belongs to the MEMO1 family.

In Methanococcus maripaludis (strain C6 / ATCC BAA-1332), this protein is MEMO1 family protein MmarC6_1286.